The chain runs to 307 residues: Thioredoxin-related transmembrane protein 2-B (307 aa).

Positions 1 to 19 (MALLTPLFAFLYHLPQVYK) are cleaved as a signal peptide. Over 20–111 (WLLKPYYIAS…VILFFRLDIR (92 aa)) the chain is Extracellular. The chain crosses the membrane as a helical span at residues 112-132 (LGLLYLTLCIVFLMTCKPPLY). The 138-residue stretch at 132–269 (YMGPEYIKYF…LYQKSKKLGK (138 aa)) folds into the Thioredoxin domain. Over 133–307 (MGPEYIKYFS…AMDTESKKDK (175 aa)) the chain is Cytoplasmic. Positions 268–307 (GKTKEKLERPSELVFSTVPEEEEPEAETISAMDTESKKDK) are disordered. Over residues 269–278 (KTKEKLERPS) the composition is skewed to basic and acidic residues. The short motif at 304-307 (KKDK) is the Di-lysine motif element.

As to quaternary structure, monomer. Homodimer; disulfide-linked. Occurs in both reduced and oxidized monomeric form. Oxidative conditions increase homodimerization.

The protein localises to the endoplasmic reticulum membrane. It localises to the mitochondrion membrane. Its function is as follows. Endoplasmic reticulum and mitochondria-associated protein that probably functions as a regulator of cellular redox state and thereby regulates protein post-translational modification, protein folding and mitochondrial activity. The protein is Thioredoxin-related transmembrane protein 2-B (tmx2b) of Danio rerio (Zebrafish).